Reading from the N-terminus, the 438-residue chain is MRISIFGLGYVGAVCAGCLSARGHEVVGVDISSTKIDLINNGKSPIVEPGLEELLQKGISTGKLRGTTDFAEAIRATDLSMICVGTPSKKNGDLELDYIESVCREIGYVLRDKATRHTIVVRSTVLPGTVANVVIPILEDCSGKKAGVDFGVAVNPEFLRESTAIKDYDLPPMTVIGEFDKASGDVLQSLYEELDAPIIRKDIAVAEMIKYTCNVWHATKVTFANEIGNIAKAVGVDGREVMDVVCQDKALNLSQYYMRPGFAFGGSCLPKDVRALTYRAGSLDVEAPLLNSLMRSNTSQVQNAFDMVASYDARKVALLGLSFKAGTDDLRESPLVELAEMLIGKGFDLSIFDSNVEYARVHGANKDYIESKIPHVSSLLNSDFDQVINDSDVIILGNRDERFRALANKTPEGKRVIDLVGFMANATSEDGRAEGICW.

Residues Tyr-10, Val-11, Asp-30, Lys-35, Thr-86, and Thr-124 each contribute to the NAD(+) site. Residues Glu-161, Lys-210, Asn-214, His-217, Asn-225, Tyr-256, Tyr-257, Arg-259, Phe-262, and Gly-265 each contribute to the GDP-alpha-D-mannuronate site. Cys-268 is a catalytic residue. Lys-271 provides a ligand contact to NAD(+). Lys-324 contacts GDP-alpha-D-mannuronate. NAD(+) is bound at residue Arg-331.

It belongs to the UDP-glucose/GDP-mannose dehydrogenase family.

The enzyme catalyses GDP-alpha-D-mannose + 2 NAD(+) + H2O = GDP-alpha-D-mannuronate + 2 NADH + 3 H(+). It functions in the pathway glycan biosynthesis; alginate biosynthesis. In terms of biological role, catalyzes the oxidation of guanosine diphospho-D-mannose (GDP-D-mannose) to GDP-D-mannuronic acid, a precursor for alginate polymerization. The alginate layer causes a mucoid phenotype and provides a protective barrier against host immune defenses and antibiotics. The chain is GDP-mannose 6-dehydrogenase (algD) from Pseudomonas syringae pv. syringae.